The primary structure comprises 144 residues: Methylglyoxal synthase (144 aa).

Residues 1–144 (MKIALIAHDE…KSGEEKETER (144 aa)) form the MGS-like domain. Residues H8, K12, 34 to 37 (TGTT), and 54 to 55 (SG) each bind substrate. D60 serves as the catalytic Proton donor/acceptor. H87 provides a ligand contact to substrate.

The protein belongs to the methylglyoxal synthase family.

It carries out the reaction dihydroxyacetone phosphate = methylglyoxal + phosphate. Its function is as follows. Catalyzes the formation of methylglyoxal from dihydroxyacetone phosphate. The chain is Methylglyoxal synthase from Geobacillus thermodenitrificans (strain NG80-2).